The primary structure comprises 442 residues: Ribosome biogenesis protein NOP53 (442 aa).

The interval 242–264 (KPSSNTNLKKIEDKTPRQAQKSV) is disordered.

The protein belongs to the NOP53 family.

It is found in the nucleus. The protein localises to the nucleolus. The protein resides in the nucleoplasm. Functionally, may play a role in ribosome biogenesis. This is Ribosome biogenesis protein NOP53 from Arabidopsis thaliana (Mouse-ear cress).